The following is a 238-amino-acid chain: Phosphoglycolate phosphatase (238 aa).

Asp-8 (nucleophile) is an active-site residue. Residues Asp-8 and Asp-10 each contribute to the Mg(2+) site. Substrate is bound at residue Lys-163. The Mg(2+) site is built by Asp-186 and Asp-190.

Belongs to the archaeal SPP-like hydrolase family. The cofactor is Mg(2+).

The enzyme catalyses 2-phosphoglycolate + H2O = glycolate + phosphate. In terms of biological role, catalyzes the dephosphorylation of 2-phosphoglycolate. The polypeptide is Phosphoglycolate phosphatase (Staphylothermus marinus (strain ATCC 43588 / DSM 3639 / JCM 9404 / F1)).